The chain runs to 113 residues: UPF0212 protein AF_0282 (113 aa).

It belongs to the UPF0212 family.

This chain is UPF0212 protein AF_0282, found in Archaeoglobus fulgidus (strain ATCC 49558 / DSM 4304 / JCM 9628 / NBRC 100126 / VC-16).